The primary structure comprises 616 residues: Homeodomain-interacting protein kinase 4 (616 aa).

The region spanning 11-347 (YDIIEVLGKG…PSAALRHPFV (337 aa)) is the Protein kinase domain. ATP is bound by residues 17–25 (LGKGTFGEV) and K40. D136 functions as the Proton acceptor in the catalytic mechanism. Positions 487 to 616 (HKARKAPAGS…SFLQHVGGHH (130 aa)) are disordered. Polar residues predominate over residues 497-512 (KSDSNFSNLIRLSQAS). S512 is modified (phosphoserine). Basic and acidic residues predominate over residues 542–560 (REGDGPSIKDRPMDAERSG).

This sequence belongs to the protein kinase superfamily. CMGC Ser/Thr protein kinase family. HIPK subfamily. Post-translationally, autophosphorylated.

It localises to the cytoplasm. It carries out the reaction L-seryl-[protein] + ATP = O-phospho-L-seryl-[protein] + ADP + H(+). The enzyme catalyses L-threonyl-[protein] + ATP = O-phospho-L-threonyl-[protein] + ADP + H(+). Protein kinase that phosphorylates TP53, and thus induces TP53 repression of BIRC5 promoter. May act as a corepressor of transcription factors (Potential). This chain is Homeodomain-interacting protein kinase 4 (Hipk4), found in Rattus norvegicus (Rat).